A 96-amino-acid polypeptide reads, in one-letter code: Co-chaperonin GroES (96 aa).

The protein belongs to the GroES chaperonin family. In terms of assembly, heptamer of 7 subunits arranged in a ring. Interacts with the chaperonin GroEL.

The protein localises to the cytoplasm. Functionally, together with the chaperonin GroEL, plays an essential role in assisting protein folding. The GroEL-GroES system forms a nano-cage that allows encapsulation of the non-native substrate proteins and provides a physical environment optimized to promote and accelerate protein folding. GroES binds to the apical surface of the GroEL ring, thereby capping the opening of the GroEL channel. The chain is Co-chaperonin GroES from Methylorubrum populi (strain ATCC BAA-705 / NCIMB 13946 / BJ001) (Methylobacterium populi).